The following is a 438-amino-acid chain: Succinyl-CoA:glutarate CoA-transferase (438 aa).

The transit peptide at 1-31 (MLATLARVAALRRTCLFSGRGGGRGLWTGRP) directs the protein to the mitochondrion. The Nucleophile role is filled by Asp205. Lys394 bears the N6-acetyllysine mark.

It belongs to the CoA-transferase III family. As to expression, highly expressed in kidney. Intermediate expression in liver, skeletal muscle and pancreas. Little to no expression detected in other tissues examined.

It localises to the mitochondrion. The catalysed reaction is glutarate + succinyl-CoA = glutaryl-CoA + succinate. It catalyses the reaction 3-hydroxy-3-methylglutarate + succinyl-CoA = (3S)-3-hydroxy-3-methylglutaryl-CoA + succinate. It carries out the reaction 3-hydroxy-3-methylglutarate + glutaryl-CoA = (3S)-3-hydroxy-3-methylglutaryl-CoA + glutarate. The enzyme catalyses hexanedioate + glutaryl-CoA = hexanedioyl-CoA + glutarate. The catalysed reaction is itaconate + glutaryl-CoA = itaconyl-CoA + glutarate. It catalyses the reaction itaconate + succinyl-CoA = itaconyl-CoA + succinate. With respect to regulation, inhibited by valsartan and losartan carboxylate. In terms of biological role, coenzyme A (CoA) transferase that reversibly catalyzes the transfer of a CoA moiety from a dicarboxyl-CoA to a dicarboxylate in a metabolite recycling process. Displays preference for succinyl-CoA and glutarate-CoA as dicarboxyl-CoA donors and glutarate, succinate, adipate/hexanedioate, itaconate and 3-hydroxy-3-methylglutarate as dicarboxylate acceptors. Acts on intermediates or end products of lysine and tryptophan degradation pathway, in particular catalyzes succinyl-CoA-dependent reesterification of free glutarate into glutaryl-CoA to prevent renal excretion of glutarate. Upon inflammation, may convert macrophage-derived itaconate to itaconyl-CoA in erythroid precursors where it negatively regulates the TCA cycle and heme synthesis to limit erythroid differentiation in the context of stress erythropoiesis. The chain is Succinyl-CoA:glutarate CoA-transferase from Homo sapiens (Human).